An 890-amino-acid chain; its full sequence is DNA mismatch repair protein MutS (890 aa).

645-652 (GPNMAGKS) is an ATP binding site.

This sequence belongs to the DNA mismatch repair MutS family.

Its function is as follows. This protein is involved in the repair of mismatches in DNA. It is possible that it carries out the mismatch recognition step. This protein has a weak ATPase activity. This is DNA mismatch repair protein MutS from Rickettsia conorii (strain ATCC VR-613 / Malish 7).